We begin with the raw amino-acid sequence, 225 residues long: PKHD-type hydroxylase YbiX (225 aa).

The Fe2OG dioxygenase domain occupies 78–177 (TLSTPLFNRY…RVASFMWIQS (100 aa)). Residues His96, Asp98, and His158 each coordinate Fe cation. Position 168 (Arg168) interacts with 2-oxoglutarate.

The cofactor is Fe(2+). It depends on L-ascorbate as a cofactor.

The chain is PKHD-type hydroxylase YbiX from Escherichia coli (strain 55989 / EAEC).